A 229-amino-acid chain; its full sequence is UPF0758 protein Ppro_3582 (229 aa).

Residues 1-20 form a disordered region; the sequence is MCPGIREWPEDERPREKMLR. A compositionally biased stretch (basic and acidic residues) spans 7 to 19; sequence EWPEDERPREKML. Residues 107–229 enclose the MPN domain; sequence RFTSPRQVFD…YLSFVERGVL (123 aa). Zn(2+) contacts are provided by H178, H180, and D191. The JAMM motif motif lies at 178-191; it reads HNHPTGDPTPSQED.

It belongs to the UPF0758 family.

This is UPF0758 protein Ppro_3582 from Pelobacter propionicus (strain DSM 2379 / NBRC 103807 / OttBd1).